A 1072-amino-acid polypeptide reads, in one-letter code: Carbamoyl phosphate synthase large chain (1072 aa).

Positions 1-401 (MPKRLDINTI…SLLKAVRSLE (401 aa)) are carboxyphosphate synthetic domain. Residues Arg129, Arg169, Gly175, Gly176, Lys208, Ile210, Glu215, Gly241, Val242, His243, Gln284, and Glu298 each coordinate ATP. The 195-residue stretch at 133 to 327 (RTLMQDLNEP…IAKLAAKIAV (195 aa)) folds into the ATP-grasp 1 domain. Mg(2+) contacts are provided by Gln284, Glu298, and Asn300. The Mn(2+) site is built by Gln284, Glu298, and Asn300. The tract at residues 402-546 (LGIYHLELDH…YSTYADENES (145 aa)) is oligomerization domain. Positions 547–929 (IVTDRKSVVV…ALYKGLVASG (383 aa)) are carbamoyl phosphate synthetic domain. The 191-residue stretch at 671–861 (EAALTKLGIP…MANVATKVIL (191 aa)) folds into the ATP-grasp 2 domain. ATP-binding residues include Arg707, Arg746, Glu752, Gly777, Val778, His779, Ser780, Gln820, and Glu832. 3 residues coordinate Mg(2+): Gln820, Glu832, and Asn834. Mn(2+)-binding residues include Gln820, Glu832, and Asn834. The 143-residue stretch at 930–1072 (INIPTHGSVI…QTKRHEVVHA (143 aa)) folds into the MGS-like domain. The tract at residues 930–1072 (INIPTHGSVI…QTKRHEVVHA (143 aa)) is allosteric domain.

This sequence belongs to the CarB family. In terms of assembly, composed of two chains; the small (or glutamine) chain promotes the hydrolysis of glutamine to ammonia, which is used by the large (or ammonia) chain to synthesize carbamoyl phosphate. Tetramer of heterodimers (alpha,beta)4. Mg(2+) serves as cofactor. The cofactor is Mn(2+).

The catalysed reaction is hydrogencarbonate + L-glutamine + 2 ATP + H2O = carbamoyl phosphate + L-glutamate + 2 ADP + phosphate + 2 H(+). It carries out the reaction hydrogencarbonate + NH4(+) + 2 ATP = carbamoyl phosphate + 2 ADP + phosphate + 2 H(+). It functions in the pathway amino-acid biosynthesis; L-arginine biosynthesis; carbamoyl phosphate from bicarbonate: step 1/1. The protein operates within pyrimidine metabolism; UMP biosynthesis via de novo pathway; (S)-dihydroorotate from bicarbonate: step 1/3. Large subunit of the glutamine-dependent carbamoyl phosphate synthetase (CPSase). CPSase catalyzes the formation of carbamoyl phosphate from the ammonia moiety of glutamine, carbonate, and phosphate donated by ATP, constituting the first step of 2 biosynthetic pathways, one leading to arginine and/or urea and the other to pyrimidine nucleotides. The large subunit (synthetase) binds the substrates ammonia (free or transferred from glutamine from the small subunit), hydrogencarbonate and ATP and carries out an ATP-coupled ligase reaction, activating hydrogencarbonate by forming carboxy phosphate which reacts with ammonia to form carbamoyl phosphate. In Bacillus cereus (strain AH187), this protein is Carbamoyl phosphate synthase large chain.